The chain runs to 105 residues: Heat shock protein HspQ (105 aa).

The disordered stretch occupies residues 75-105 (SELQDEHPEQPSMDELAQTIRKQLQAPRLRN).

It belongs to the HspQ family.

Its subcellular location is the cytoplasm. In terms of biological role, involved in the degradation of certain denaturated proteins, including DnaA, during heat shock stress. This Escherichia coli O127:H6 (strain E2348/69 / EPEC) protein is Heat shock protein HspQ.